A 387-amino-acid chain; its full sequence is Radial spoke protein 14 (387 aa).

ARM repeat units follow at residues 24 to 67 (KALP…ELLS), 69 to 109 (PVNH…LLAA), 111 to 150 (EVGA…EAAR), 154 to 198 (TRRA…TCTQ), 204 to 244 (GILS…ALAT), 245 to 286 (REDA…AITI), 289 to 328 (EGKY…NVAE), and 330 to 370 (PEAR…QCRF).

It belongs to the flagellar radial spoke RSP14 family.

The protein resides in the cytoplasm. It is found in the cytoskeleton. Its subcellular location is the flagellum axoneme. In Chlamydomonas reinhardtii (Chlamydomonas smithii), this protein is Radial spoke protein 14 (RSP14).